We begin with the raw amino-acid sequence, 196 residues long: Large ribosomal subunit protein mL66 (196 aa).

The transit peptide at 1–34 (MAALKALVSGCGRLLRGLLAGPAATSWSRLPARG) directs the protein to the mitochondrion.

It belongs to the bacterial ribosomal protein bS18 family. Mitochondrion-specific ribosomal protein mL66 subfamily. As to quaternary structure, component of the mitochondrial large ribosomal subunit (mt-LSU). Mature mammalian 55S mitochondrial ribosomes consist of a small (28S) and a large (39S) subunit. The 28S small subunit contains a 12S ribosomal RNA (12S mt-rRNA) and 30 different proteins. The 39S large subunit contains a 16S rRNA (16S mt-rRNA), a copy of mitochondrial valine transfer RNA (mt-tRNA(Val)), which plays an integral structural role, and 52 different proteins. mL66 forms a zinc-binding site with uL10m.

It is found in the mitochondrion. The chain is Large ribosomal subunit protein mL66 (MRPS18A) from Homo sapiens (Human).